A 197-amino-acid polypeptide reads, in one-letter code: Putative peptidyl-prolyl cis-trans isomerase (197 aa).

One can recognise a PPIase cyclophilin-type domain in the interval 14–195 (NEIKLIMHTN…HDITIDSIEI (182 aa)).

This sequence belongs to the cyclophilin-type PPIase family.

It carries out the reaction [protein]-peptidylproline (omega=180) = [protein]-peptidylproline (omega=0). Functionally, PPIases accelerate the folding of proteins. It catalyzes the cis-trans isomerization of proline imidic peptide bonds in oligopeptides. The chain is Putative peptidyl-prolyl cis-trans isomerase from Staphylococcus saprophyticus subsp. saprophyticus (strain ATCC 15305 / DSM 20229 / NCIMB 8711 / NCTC 7292 / S-41).